The primary structure comprises 976 residues: uncharacterized protein (976 aa).

This is an uncharacterized protein from Acanthamoeba polyphaga (Amoeba).